Here is a 552-residue protein sequence, read N- to C-terminus: Putative transport protein PBPRA2144 (552 aa).

The next 5 membrane-spanning stretches (helical) occupy residues 4-24 (IALSISILALVAVLGLWIGNW), 26-46 (ICGVGLGIGGVLFGGIFVGHF), 65-85 (FGLILFVYTIGIQVGPGFFAS), 95-115 (AFAALVVLLGCIVAIGLYKIF), and 158-178 (MGYAVAYPFGICGILLTMWIL). RCK C-terminal domains are found at residues 188-276 (KEAE…VIGE) and 279-361 (DASL…IVGN). 6 helical membrane passes run 371–391 (MLPVFVGIGLGVLLGSIPFYL), 394–414 (FPAAIKLGLAGGPLLVALILA), 439–459 (IVLFLAVVGLKSGGGFVDTLV), 464–484 (LSWMGYGIVITLVPLLTVGFL), 493–513 (YLTICGMLAGSMTDPPALAFA), and 532–552 (PLVMCLRILSPQILALLLWAV).

This sequence belongs to the AAE transporter (TC 2.A.81) family. YidE subfamily.

It is found in the cell membrane. The chain is Putative transport protein PBPRA2144 from Photobacterium profundum (strain SS9).